The chain runs to 214 residues: Phosphatidylcholine transfer protein (214 aa).

Met1 bears the N-acetylmethionine mark. Residues 1–212 enclose the START domain; sequence MELAAGSFSE…MARACQNYLK (212 aa). Positions 72 and 78 each coordinate a 1,2-diacyl-sn-glycero-3-phosphocholine. Phosphoserine is present on Ser139. Gln157 provides a ligand contact to a 1,2-diacyl-sn-glycero-3-phosphocholine.

In terms of assembly, interacts with ACOT13/THEM2. In terms of tissue distribution, highest expression in liver, placenta, testis, kidney and heart. Low levels in brain and lung. No expression detected in thymus.

The protein resides in the cytoplasm. Catalyzes the transfer of phosphatidylcholine between membranes. Binds a single lipid molecule. In Homo sapiens (Human), this protein is Phosphatidylcholine transfer protein (PCTP).